Reading from the N-terminus, the 93-residue chain is Small ribosomal subunit protein uS19 (93 aa).

It belongs to the universal ribosomal protein uS19 family.

Functionally, protein S19 forms a complex with S13 that binds strongly to the 16S ribosomal RNA. This chain is Small ribosomal subunit protein uS19, found in Microcystis aeruginosa (strain NIES-843 / IAM M-2473).